The primary structure comprises 546 residues: Cysteine--tRNA ligase (546 aa).

A Zn(2+)-binding site is contributed by cysteine 57. Positions 59-69 (ATVQSSPHIGH) match the 'HIGH' region motif. Residues 211–236 (PSVDATGADKYNPVDPADASPDKHDP) are disordered. Positions 270, 295, and 299 each coordinate Zn(2+). The short motif at 326–330 (KMSKS) is the 'KMSKS' region element. Lysine 329 is an ATP binding site.

The protein belongs to the class-I aminoacyl-tRNA synthetase family. As to quaternary structure, monomer. Zn(2+) serves as cofactor.

The protein localises to the cytoplasm. It carries out the reaction tRNA(Cys) + L-cysteine + ATP = L-cysteinyl-tRNA(Cys) + AMP + diphosphate. The sequence is that of Cysteine--tRNA ligase from Bifidobacterium longum (strain NCC 2705).